The sequence spans 329 residues: Cathepsin K (329 aa).

An N-terminal signal peptide occupies residues 1–15 (MWGLKVLLLPVVSFA). The propeptide at 16–114 (LYPEEILDTH…TLYIPEWEGR (99 aa)) is activation peptide. Asn-103 carries N-linked (GlcNAc...) asparagine glycosylation. 3 disulfides stabilise this stretch: Cys-136-Cys-177, Cys-170-Cys-210, and Cys-269-Cys-318. Residue Cys-139 is part of the active site. Residues His-276 and Asn-296 contribute to the active site.

This sequence belongs to the peptidase C1 family. As to expression, predominantly expressed in osteoclasts (bones). Expressed in thyroid epithelial cells.

It is found in the lysosome. The protein resides in the secreted. It localises to the apical cell membrane. The catalysed reaction is Broad proteolytic activity. With small-molecule substrates and inhibitors, the major determinant of specificity is P2, which is preferably Leu, Met &gt; Phe, and not Arg.. Functionally, thiol protease involved in osteoclastic bone resorption and may participate partially in the disorder of bone remodeling. Displays potent endoprotease activity against fibrinogen at acid pH. May play an important role in extracellular matrix degradation. Involved in the release of thyroid hormone thyroxine (T4) by limited proteolysis of TG/thyroglobulin in the thyroid follicle lumen. This is Cathepsin K (CTSK) from Homo sapiens (Human).